The following is a 137-amino-acid chain: Small ribosomal subunit protein bS6 (137 aa).

Residues 96–137 (VTEQSIMLKQKEERAERAPRRDDREERAPRREEEAKPEAAAE) form a disordered region. Residues 104 to 137 (KQKEERAERAPRRDDREERAPRREEEAKPEAAAE) are compositionally biased toward basic and acidic residues.

This sequence belongs to the bacterial ribosomal protein bS6 family.

Its function is as follows. Binds together with bS18 to 16S ribosomal RNA. This Vibrio atlanticus (strain LGP32) (Vibrio splendidus (strain Mel32)) protein is Small ribosomal subunit protein bS6.